The following is a 562-amino-acid chain: Probable E3 ubiquitin-protein ligase ARI7 (562 aa).

The disordered stretch occupies residues 1–39 (MDSEEDMLDAHDMESGEDDFYSGGTDDCNDSDDGEPDYG). A compositionally biased stretch (acidic residues) spans 27 to 39 (DCNDSDDGEPDYG). The tract at residues 133 to 346 (SELTCGICFD…GGFYACNRYE (214 aa)) is TRIAD supradomain. Positions 137, 140, 154, 156, 159, 162, 182, 187, 226, 231, 248, 250, 255, 258, 263, 268, 295, and 298 each coordinate Zn(2+). Residues 137–187 (CGICFDSYPPEKIASVSCGHPFCTTCWTGYISTTINDGPGCLMLRCPDPSC) form an RING-type 1 zinc finger. An IBR-type zinc finger spans residues 206 to 268 (EKYNRYFLRS…TEEAHRPVDC (63 aa)). An RING-type 2; atypical zinc finger spans residues 295-325 (CPRCKRPIEKNQGCMHMTCTPPCKYEFCWLC). Cys-308 is a catalytic residue. Residues Cys-313, Cys-317, Cys-322, Cys-325, His-332, and Cys-342 each coordinate Zn(2+). The segment at 524–562 (ACSSKSTSSKSTGCSSKTRGKGKGSSRTGGSSRNPDDNL) is disordered. Positions 525 to 540 (CSSKSTSSKSTGCSSK) are enriched in low complexity.

Belongs to the RBR family. Ariadne subfamily. It depends on Zn(2+) as a cofactor. Ubiquitous.

It catalyses the reaction [E2 ubiquitin-conjugating enzyme]-S-ubiquitinyl-L-cysteine + [acceptor protein]-L-lysine = [E2 ubiquitin-conjugating enzyme]-L-cysteine + [acceptor protein]-N(6)-ubiquitinyl-L-lysine.. It functions in the pathway protein modification; protein ubiquitination. In terms of biological role, might act as an E3 ubiquitin-protein ligase, or as part of E3 complex, which accepts ubiquitin from specific E2 ubiquitin-conjugating enzymes and then transfers it to substrates. The polypeptide is Probable E3 ubiquitin-protein ligase ARI7 (ARI7) (Arabidopsis thaliana (Mouse-ear cress)).